Here is a 505-residue protein sequence, read N- to C-terminus: Kinesin light chain 3 (505 aa).

The segment at 1–20 is disordered; sequence MSVQVAAPGSTGLGPERLNP. Residues 90 to 150 are a coiled coil; it reads ALSAHVGVLE…EEEKSHLQFL (61 aa). The disordered stretch occupies residues 154-197; that stretch reads RQYDPPEESQRPDSPPRRDSLASLFPSEEEEKKGPEAAGAAAAQ. The segment covering 161-173 has biased composition (basic and acidic residues); it reads ESQRPDSPPRRDS. Ser-173 carries the phosphoserine modification. TPR repeat units lie at residues 207 to 240, 249 to 282, 291 to 324, 333 to 366, and 375 to 408; these read LRTL…LERS, ATML…REQT, AATL…REKV, AKQL…YEAL, and AKTK…EALP. The disordered stretch occupies residues 409–439; sequence APLGAPQGGTAGEAQQQVLRRSSSFSKLRES. A compositionally biased stretch (polar residues) spans 421 to 434; the sequence is EAQQQVLRRSSSFS. Residue Ser-467 is modified to Phosphoserine. The interval 486-505 is disordered; the sequence is QHLNEASRTLSASTQDLSPR. Thr-499 is modified (phosphothreonine). Ser-503 carries the phosphoserine modification.

The protein belongs to the kinesin light chain family. As to quaternary structure, oligomer composed of two heavy chains and two light chains. Associates with microtubulin in an ATP-dependent manner. Interacts with KIF5C. Interacts with ODF1. Interacts with LRGUK. Interacts with VDAC2. In terms of tissue distribution, expressed in postmeiotic male germ cells (at protein level).

Its subcellular location is the cytoplasm. It localises to the cytoskeleton. The protein localises to the mitochondrion. Its function is as follows. Kinesin is a microtubule-associated force-producing protein that may play a role in organelle transport. Plays a role during spermiogenesis in the development of the sperm tail midpiece and in the normal function of spermatozoa. May play a role in the formation of the mitochondrial sheath formation in the developing spermatid midpiece. This is Kinesin light chain 3 (Klc3) from Rattus norvegicus (Rat).